Here is a 370-residue protein sequence, read N- to C-terminus: tRNA/tmRNA (uracil-C(5))-methyltransferase (370 aa).

Residues glutamine 190, tyrosine 218, asparagine 223, glutamate 239, and aspartate 299 each contribute to the S-adenosyl-L-methionine site. Cysteine 324 functions as the Nucleophile in the catalytic mechanism. Glutamate 358 acts as the Proton acceptor in catalysis.

Belongs to the class I-like SAM-binding methyltransferase superfamily. RNA M5U methyltransferase family. TrmA subfamily.

The catalysed reaction is uridine(54) in tRNA + S-adenosyl-L-methionine = 5-methyluridine(54) in tRNA + S-adenosyl-L-homocysteine + H(+). It carries out the reaction uridine(341) in tmRNA + S-adenosyl-L-methionine = 5-methyluridine(341) in tmRNA + S-adenosyl-L-homocysteine + H(+). Dual-specificity methyltransferase that catalyzes the formation of 5-methyluridine at position 54 (m5U54) in all tRNAs, and that of position 341 (m5U341) in tmRNA (transfer-mRNA). In Sodalis glossinidius (strain morsitans), this protein is tRNA/tmRNA (uracil-C(5))-methyltransferase.